Reading from the N-terminus, the 177-residue chain is ATP synthase subunit delta (177 aa).

This sequence belongs to the ATPase delta chain family. F-type ATPases have 2 components, F(1) - the catalytic core - and F(0) - the membrane proton channel. F(1) has five subunits: alpha(3), beta(3), gamma(1), delta(1), epsilon(1). F(0) has three main subunits: a(1), b(2) and c(10-14). The alpha and beta chains form an alternating ring which encloses part of the gamma chain. F(1) is attached to F(0) by a central stalk formed by the gamma and epsilon chains, while a peripheral stalk is formed by the delta and b chains.

The protein resides in the cell inner membrane. Its function is as follows. F(1)F(0) ATP synthase produces ATP from ADP in the presence of a proton or sodium gradient. F-type ATPases consist of two structural domains, F(1) containing the extramembraneous catalytic core and F(0) containing the membrane proton channel, linked together by a central stalk and a peripheral stalk. During catalysis, ATP synthesis in the catalytic domain of F(1) is coupled via a rotary mechanism of the central stalk subunits to proton translocation. Functionally, this protein is part of the stalk that links CF(0) to CF(1). It either transmits conformational changes from CF(0) to CF(1) or is implicated in proton conduction. In Janthinobacterium sp. (strain Marseille) (Minibacterium massiliensis), this protein is ATP synthase subunit delta.